The primary structure comprises 26 residues: uncharacterized protein (26 aa).

In terms of processing, phosphorylated by YfhK.

Functionally, probable member of a two-component regulatory system YfhA/YfhK. This is an uncharacterized protein from Klebsiella oxytoca.